Reading from the N-terminus, the 396-residue chain is Obg-like ATPase 1 (396 aa).

The OBG-type G domain maps to 23 to 283 (LKIGIVGLPN…MSAEEKQKYL (261 aa)). 32–37 (NVGKST) provides a ligand contact to ATP. Mg(2+)-binding residues include Ser36 and Thr56. Leu231 provides a ligand contact to ATP. The Nuclear export signal motif lies at 267-274 (LELKLQDM). One can recognise a TGS domain in the interval 304-387 (QLEYFFTAGP…EDGDIIFFKF (84 aa)).

The protein belongs to the TRAFAC class OBG-HflX-like GTPase superfamily. OBG GTPase family. YchF/OLA1 subfamily. In terms of assembly, monomer. The cofactor is Mg(2+).

It localises to the cytoplasm. The protein localises to the nucleus. Its subcellular location is the nucleolus. Functionally, hydrolyzes ATP, and can also hydrolyze GTP with lower efficiency. Has lower affinity for GTP. This Gallus gallus (Chicken) protein is Obg-like ATPase 1.